We begin with the raw amino-acid sequence, 2013 residues long: Centrosomal protein 224 (2013 aa).

HEAT repeat units lie at residues 115-153 (TIEA…ALKT), 158-196 (QIPV…WIGK), 200-238 (PLIS…EAAK), 348-386 (TSYV…KSIS), and 427-465 (TKVT…IIGE). Positions 512–557 (PVSSSNKKPAAATGNSKSSSTTTPTGRSSNSSPLPPPPSSSDDIKN) are disordered. A compositionally biased stretch (low complexity) spans 524 to 543 (TGNSKSSSTTTPTGRSSNSS). 5 HEAT repeats span residues 724–762 (IQQL…NIGA), 816–854 (VDIS…DANR), 857–895 (QPKL…AMGG), 899–937 (EKHA…SDLG), and 977–1015 (PSEI…QIPL). The disordered stretch occupies residues 1043–1109 (KTGQPIPPPS…QQQQRRSILQ (67 aa)). The span at 1053 to 1106 (KTKQSTSSSSSSSSTTSQQSSTPSSPQPIRQQQQQQQQQPTQPQQQQQQQQRRS) shows a compositional bias: low complexity. HEAT repeat units follow at residues 1240-1279 (EYEA…LCLP), 1281-1314 (VLFR…KNGA), and 1317-1353 (CGNL…HIKD). 3 stretches are compositionally biased toward low complexity: residues 1372–1406 (NNNN…QQQQ), 1695–1735 (NRIS…INSS), and 1746–1796 (SNNT…TLST). Disordered regions lie at residues 1372 to 1413 (NNNN…SLST), 1695 to 1809 (NRIS…YSGK), 1905 to 1949 (NQPS…IAPQ), and 1966 to 1995 (TLNP…DLNS). The span at 1799–1809 (INKEPRDYSGK) shows a compositional bias: basic and acidic residues. Residues 1913–1939 (NNNNNNNNNNNNNNNNNINNNNNNNNN) are compositionally biased toward low complexity. The span at 1940–1949 (SGGNENIAPQ) shows a compositional bias: polar residues. The span at 1967-1995 (LNPDQNSGSNNNNSHQNSPSTSSSNDLNS) shows a compositional bias: low complexity.

Belongs to the TOG/XMAP215 family. Interacts with eb1 at the microtubule tip, centrosome and kinetochore. Interacts with lis1 in the cortical attachment of microtubules.

It localises to the cytoplasm. It is found in the cytoskeleton. The protein resides in the microtubule organizing center. Its subcellular location is the centrosome. The protein localises to the chromosome. It localises to the centromere. It is found in the kinetochore. Its function is as follows. Involved in regulation of microtubule dynamics. Regulates the interaction of microtubules tips with the centrosome and cell cortex. The sequence is that of Centrosomal protein 224 (mtaA) from Dictyostelium discoideum (Social amoeba).